Reading from the N-terminus, the 215-residue chain is Glutathione S-transferase stcT (215 aa).

The GST N-terminal domain occupies 2 to 82 (PFGTLYTRPF…YDSNTTLLGT (81 aa)). Residues Lys-52 and Glu-66 each contribute to the glutathione site. Lys-52 contributes to the substrate binding site. Residues 83-211 (TGQEYASIIR…PVLAEYEMPI (129 aa)) enclose the GST C-terminal domain.

The protein belongs to the GST superfamily. Glutathione serves as cofactor.

The protein operates within mycotoxin biosynthesis; sterigmatocystin biosynthesis. Functionally, glutathione S-transferase; part of the gene cluster that mediates the biosynthesis of sterigmatocystin (ST), a polyketide-derived furanocoumarin which is part of the most toxic and carcinogenic compounds among the known mycotoxins. The first step in the biosynthesis of sterigmatocystin is the production of hexanoate by the fatty acid synthase (FAS) units stcJ and stcK. The polyketide backbone is assembled by the non-reducing polyketide synthase stcA by condensation of the starter hexanoyl-CoA and 7 malonyl-CoA extender units followed by cyclization and release of norsolorinic acid. Norsolorinic acid is the first stable intermediate in the biosynthesis of sterigmatocystin and is converted into averantin (AVN) by the ketoreductase stcE which reduces the hexanoate ketone to an alcohol. Averantin is then oxidized into 5'-hydroxyaverantin (HAVN) by the cytochrome P450 monooxygenase stcF. 5'-hydroxyaverantin is further converted to 5'-oxyaverantin (OAVN) by the 5'-hydroxyaverantin dehydrogenase stcG. The next step is the conversion of OAVN into averufin (AVF) which is catalyzed by a yet to be identified enzyme. The cytochrome P450 monooxygenase stcB and the flavin-binding monooxygenase stcW are both required for the conversion of averufin to 1-hydroxyversicolorone. The esterase stcI probably catalyzes the formation of versiconal hemiacetal acetate from 1-hydroxyversicolorone. The oxydoreductase stcN then probably catalyzes the biosynthetic step from versiconal to versicolorin B (VERB). The next step is performed by the versicolorin B desaturase stcL to produce versicolorin A (VERA). The ketoreductase stcU and the cytochrome P450 monooxygenase stcS are involved in the conversion of versicolorin A to demethylsterigmatocystin. The Baeyer-Villiger oxidas stcQ and the reductase stcR might be involved in the biosynthetic step from versicolorin A to demethylsterigmatocystin. The final step in the biosynthesis of sterigmatocystin is the methylation of demethylsterigmatocystin catalyzed by the methyltransferase stcP. The sequence is that of Glutathione S-transferase stcT from Emericella nidulans (strain FGSC A4 / ATCC 38163 / CBS 112.46 / NRRL 194 / M139) (Aspergillus nidulans).